We begin with the raw amino-acid sequence, 196 residues long: Molybdenum cofactor guanylyltransferase (196 aa).

Residues 10–12 (LAG), lysine 23, asparagine 51, aspartate 69, and aspartate 99 contribute to the GTP site. Aspartate 99 is a Mg(2+) binding site.

It belongs to the MobA family. Monomer. Requires Mg(2+) as cofactor.

It localises to the cytoplasm. It catalyses the reaction Mo-molybdopterin + GTP + H(+) = Mo-molybdopterin guanine dinucleotide + diphosphate. In terms of biological role, transfers a GMP moiety from GTP to Mo-molybdopterin (Mo-MPT) cofactor (Moco or molybdenum cofactor) to form Mo-molybdopterin guanine dinucleotide (Mo-MGD) cofactor. The polypeptide is Molybdenum cofactor guanylyltransferase (Shewanella sediminis (strain HAW-EB3)).